A 389-amino-acid chain; its full sequence is Lipid-A-disaccharide synthase (389 aa).

This sequence belongs to the LpxB family.

It catalyses the reaction a lipid X + a UDP-2-N,3-O-bis[(3R)-3-hydroxyacyl]-alpha-D-glucosamine = a lipid A disaccharide + UDP + H(+). Its pathway is bacterial outer membrane biogenesis; LPS lipid A biosynthesis. Functionally, condensation of UDP-2,3-diacylglucosamine and 2,3-diacylglucosamine-1-phosphate to form lipid A disaccharide, a precursor of lipid A, a phosphorylated glycolipid that anchors the lipopolysaccharide to the outer membrane of the cell. This Burkholderia lata (strain ATCC 17760 / DSM 23089 / LMG 22485 / NCIMB 9086 / R18194 / 383) protein is Lipid-A-disaccharide synthase.